Here is a 255-residue protein sequence, read N- to C-terminus: Imidazole glycerol phosphate synthase subunit HisF (255 aa).

Residues Asp12 and Asp131 contribute to the active site.

It belongs to the HisA/HisF family. As to quaternary structure, heterodimer of HisH and HisF.

The protein localises to the cytoplasm. It carries out the reaction 5-[(5-phospho-1-deoxy-D-ribulos-1-ylimino)methylamino]-1-(5-phospho-beta-D-ribosyl)imidazole-4-carboxamide + L-glutamine = D-erythro-1-(imidazol-4-yl)glycerol 3-phosphate + 5-amino-1-(5-phospho-beta-D-ribosyl)imidazole-4-carboxamide + L-glutamate + H(+). The protein operates within amino-acid biosynthesis; L-histidine biosynthesis; L-histidine from 5-phospho-alpha-D-ribose 1-diphosphate: step 5/9. In terms of biological role, IGPS catalyzes the conversion of PRFAR and glutamine to IGP, AICAR and glutamate. The HisF subunit catalyzes the cyclization activity that produces IGP and AICAR from PRFAR using the ammonia provided by the HisH subunit. The sequence is that of Imidazole glycerol phosphate synthase subunit HisF from Neisseria meningitidis serogroup C (strain 053442).